Here is a 296-residue protein sequence, read N- to C-terminus: NADH-ubiquinone oxidoreductase chain 2 (296 aa).

8 helical membrane passes run 5 to 25, 49 to 69, 71 to 91, 114 to 134, 167 to 187, 209 to 229, 242 to 262, and 276 to 296; these read LCLF…GLWL, YFLI…NQSF, FLIP…MWLV, LLGL…SAFI, FFLM…AVIL, ASIS…GFFI, LLVL…FSIA, and KMEI…LFFL.

This sequence belongs to the complex I subunit 2 family.

The protein localises to the mitochondrion inner membrane. It catalyses the reaction a ubiquinone + NADH + 5 H(+)(in) = a ubiquinol + NAD(+) + 4 H(+)(out). Core subunit of the mitochondrial membrane respiratory chain NADH dehydrogenase (Complex I) that is believed to belong to the minimal assembly required for catalysis. Complex I functions in the transfer of electrons from NADH to the respiratory chain. The immediate electron acceptor for the enzyme is believed to be ubiquinone. The protein is NADH-ubiquinone oxidoreductase chain 2 (ND2) of Artemia franciscana (Brine shrimp).